We begin with the raw amino-acid sequence, 305 residues long: tRNA pseudouridine synthase B (305 aa).

The active-site Nucleophile is the Asp-39.

It belongs to the pseudouridine synthase TruB family. Type 1 subfamily.

It carries out the reaction uridine(55) in tRNA = pseudouridine(55) in tRNA. Responsible for synthesis of pseudouridine from uracil-55 in the psi GC loop of transfer RNAs. This Staphylococcus aureus (strain Mu50 / ATCC 700699) protein is tRNA pseudouridine synthase B.